A 691-amino-acid polypeptide reads, in one-letter code: Proprotein convertase subtilisin/kexin type 9 (691 aa).

Residues 1–30 (MGIRCSTWLRWPLSPQLLLLLLLCPTGSRA) form the signal peptide. A propeptide spanning residues 31–151 (QDEDGDYEEL…IEEDSLVFAQ (121 aa)) is cleaved from the precursor. Tyrosine 37 carries the post-translational modification Sulfotyrosine. The residue at position 46 (serine 46) is a Phosphoserine. The 288-residue stretch at 154-441 (PWNLERIIPA…QRVLTPNRVA (288 aa)) folds into the Peptidase S8 domain. Catalysis depends on charge relay system residues aspartate 185 and histidine 225. 2 cysteine pairs are disulfide-bonded: cysteine 222–cysteine 254 and cysteine 322–cysteine 357. Catalysis depends on serine 385, which acts as the Charge relay system. The C-terminal domain stretch occupies residues 449 to 691 (ETGGQLLCRT…PSAKASWVHQ (243 aa)). 3 disulfide bridges follow: cysteine 456-cysteine 526, cysteine 476-cysteine 525, and cysteine 485-cysteine 508. Positions 495–497 (RGD) match the Cell attachment site motif. N-linked (GlcNAc...) asparagine glycosylation is present at asparagine 532. 6 cysteine pairs are disulfide-bonded: cysteine 533–cysteine 600, cysteine 551–cysteine 599, cysteine 561–cysteine 587, cysteine 607–cysteine 678, cysteine 625–cysteine 677, and cysteine 634–cysteine 653. Serine 687 bears the Phosphoserine mark.

It belongs to the peptidase S8 family. Monomer. Can self-associate to form dimers and higher multimers which may have increased LDLR degrading activity. The precursor protein but not the mature protein may form multimers. Interacts with APOB, VLDLR, LRP8/APOER2 and BACE1. The full-length immature form (pro-PCSK9) interacts with SCNN1A, SCNN1B and SCNN1G. The pro-PCSK9 form (via C-terminal domain) interacts with LDLR. Interacts (via the C-terminal domain) with ANXA2 (via repeat Annexin 1); the interaction inhibits the degradation of LDLR. It depends on Ca(2+) as a cofactor. Cleavage by furin and PCSK5 generates a truncated inactive protein that is unable to induce LDLR degradation. Post-translationally, undergoes autocatalytic cleavage in the endoplasmic reticulum to release the propeptide from the N-terminus and the cleavage of the propeptide is strictly required for its maturation and activation. The cleaved propeptide however remains associated with the catalytic domain through non-covalent interactions, preventing potential substrates from accessing its active site. As a result, it is secreted from cells as a propeptide-containing, enzymatically inactive protein. In terms of processing, phosphorylation protects the propeptide against proteolysis. In terms of tissue distribution, highly expressed in 12-day embryo. In the adult, strongly expressed in liver, small intestine, jejunum, and to a lesser extent in kidney, lung, spleen and thymus. Expression in the liver is up-regulated following partial hepatectomy.

It localises to the cytoplasm. The protein localises to the secreted. Its subcellular location is the endosome. The protein resides in the lysosome. It is found in the cell surface. It localises to the endoplasmic reticulum. The protein localises to the golgi apparatus. With respect to regulation, its proteolytic activity is autoinhibited by the non-covalent binding of the propeptide to the catalytic domain. Inhibited by EGTA. In terms of biological role, crucial player in the regulation of plasma cholesterol homeostasis. Binds to low-density lipid receptor family members: low density lipoprotein receptor (LDLR), very low density lipoprotein receptor (VLDLR), apolipoprotein E receptor (LRP1/APOER) and apolipoprotein receptor 2 (LRP8/APOER2), and promotes their degradation in intracellular acidic compartments. Acts via a non-proteolytic mechanism to enhance the degradation of the hepatic LDLR through a clathrin LDLRAP1/ARH-mediated pathway. May prevent the recycling of LDLR from endosomes to the cell surface or direct it to lysosomes for degradation. Can induce ubiquitination of LDLR leading to its subsequent degradation. Inhibits intracellular degradation of APOB via the autophagosome/lysosome pathway in a LDLR-independent manner. Involved in the disposal of non-acetylated intermediates of BACE1 in the early secretory pathway. Inhibits epithelial Na(+) channel (ENaC)-mediated Na(+) absorption by reducing ENaC surface expression primarily by increasing its proteasomal degradation. Regulates neuronal apoptosis via modulation of LRP8/APOER2 levels and related anti-apoptotic signaling pathways. In Rattus norvegicus (Rat), this protein is Proprotein convertase subtilisin/kexin type 9 (Pcsk9).